The chain runs to 356 residues: 4-hydroxybenzoate polyprenyltransferase, mitochondrial (356 aa).

A mitochondrion-targeting transit peptide spans Met1–Pro44. The next 6 helical transmembrane spans lie at Val71–Ala91, Pro93–Met113, Ala150–Trp170, Trp195–Leu215, Trp269–Asp289, and Ile332–Ile352.

The protein belongs to the UbiA prenyltransferase family. It depends on Mg(2+) as a cofactor.

It localises to the mitochondrion inner membrane. The enzyme catalyses an all-trans-polyprenyl diphosphate + 4-hydroxybenzoate = a 4-hydroxy-3-(all-trans-polyprenyl)benzoate + diphosphate. Its pathway is cofactor biosynthesis; ubiquinone biosynthesis. Functionally, catalyzes the prenylation of para-hydroxybenzoate (PHB) with an all-trans polyprenyl group. Mediates the second step in the final reaction sequence of coenzyme Q (CoQ) biosynthesis, which is the condensation of the polyisoprenoid side chain with PHB, generating the first membrane-bound Q intermediate. The polypeptide is 4-hydroxybenzoate polyprenyltransferase, mitochondrial (coq-2) (Caenorhabditis elegans).